The sequence spans 251 residues: Prothoracicostatic peptides (251 aa).

The disordered stretch occupies residues 1–22 (MRKSARGQVCTEAGAGASGDWQ). Positions 1–77 (MRKSARGQVC…GWQDLNSAWG (77 aa)) are excised as a propeptide. Tryptophan 89 is modified (tryptophan amide). The propeptide occupies 93–138 (GWNDMSSAWGKRGWNDMSSAWGKRGWNDMSSAWGKRGWNDMSSAWG). Tryptophan 152 bears the Tryptophan amide mark. Residues 156 to 187 (AAEPDYEEIDAAIEQLIPIQQLSDNERMEVPE) constitute a propeptide that is removed on maturation. A tryptophan amide mark is found at tryptophan 198 and tryptophan 228. The segment at 227 to 251 (MWGKRSAPDADAVDDDHESSARDEA) is disordered.

Prothoracicostatic peptide 5: Expressed in antennal lobe (AL), corpora cardiaca (CC), corpora allata (CA) and gnathal ganglion (GNG) (at protein level). Expression in AL detected in all animals, in CC, CA and GNG in most (at protein level). Prothoracicostatic peptide 6: Expressed in antennal lobe (AL), corpora cardiaca (CC), corpora allata (CA) and gnathal ganglion (GNG) (at protein level). Expression in AL detected in all animals, expression in GNG in most animals, in CA and CC detected in some animals (at protein level). Prothoracicostatic peptide 7: Expressed in antennal lobe (AL), corpora cardiaca (CC), corpora allata (CA) and gnathal ganglion (GNG) (at protein level). Expression in AL, CA and CC detected in most animals, expression in GNG in some animals (at protein level). Prothoracicostatic peptide precursor-related peptide 2: Expressed in antennal lobe (AL), corpora cardiaca (CC) and corpora allata (CA) with expression detected in few animals (at protein level). Not expressed in gnathal ganglion (GNG) (at protein level). Prothoracicostatic peptide 8: Expressed in antennal lobe (AL), corpora cardiaca (CC), corpora allata (CA) and gnathal ganglion (GNG) (at protein level). Expression in AL detected in all animals, expression in GNG in most animals, in CA and CC detected in some animals (at protein level). Prothoracicostatic peptide precursor-related peptide 3: Expressed in antennal lobe (AL) in few animals (at protein level). Not expressed in corpora cardiaca (CC), corpora allata (CA) and gnathal ganglion (GNG) (at protein level).

Its subcellular location is the secreted. In Agrotis ipsilon (Black cutworm moth), this protein is Prothoracicostatic peptides.